The sequence spans 333 residues: Fructose-1,6-bisphosphatase class 1 1 (333 aa).

Mg(2+) is bound by residues glutamate 81, aspartate 100, leucine 102, and aspartate 103. Residues 103–106 and asparagine 191 contribute to the substrate site; that span reads DGSS. A Mg(2+)-binding site is contributed by glutamate 263.

The protein belongs to the FBPase class 1 family. As to quaternary structure, homotetramer. Mg(2+) serves as cofactor.

It localises to the cytoplasm. The catalysed reaction is beta-D-fructose 1,6-bisphosphate + H2O = beta-D-fructose 6-phosphate + phosphate. The protein operates within carbohydrate biosynthesis; Calvin cycle. The protein is Fructose-1,6-bisphosphatase class 1 1 of Cereibacter sphaeroides (strain ATCC 17025 / ATH 2.4.3) (Rhodobacter sphaeroides).